A 494-amino-acid polypeptide reads, in one-letter code: Guanosine-5'-triphosphate,3'-diphosphate pyrophosphatase (494 aa).

Belongs to the GppA/Ppx family. GppA subfamily.

It catalyses the reaction guanosine 3'-diphosphate 5'-triphosphate + H2O = guanosine 3',5'-bis(diphosphate) + phosphate + H(+). Its pathway is purine metabolism; ppGpp biosynthesis; ppGpp from GTP: step 2/2. Catalyzes the conversion of pppGpp to ppGpp. Guanosine pentaphosphate (pppGpp) is a cytoplasmic signaling molecule which together with ppGpp controls the 'stringent response', an adaptive process that allows bacteria to respond to amino acid starvation, resulting in the coordinated regulation of numerous cellular activities. The sequence is that of Guanosine-5'-triphosphate,3'-diphosphate pyrophosphatase from Escherichia coli O127:H6 (strain E2348/69 / EPEC).